The chain runs to 348 residues: Probable purine nucleoside permease C285.05 (348 aa).

The N-terminal stretch at 1–21 (MLFLKLVASVLALMTIVPAQA) is a signal peptide.

It belongs to the NUP family.

It localises to the endoplasmic reticulum. In terms of biological role, probable nucleoside permease that transports adenosine and guanosine. The sequence is that of Probable purine nucleoside permease C285.05 from Schizosaccharomyces pombe (strain 972 / ATCC 24843) (Fission yeast).